Here is a 549-residue protein sequence, read N- to C-terminus: Cation/acetate symporter ActP (549 aa).

A run of 13 helical transmembrane segments spans residues 33 to 53 (WQAIIMFLIFVVFTLGITYWA), 77 to 97 (LAIAGDYMSAASFLGISALVF), 103 to 123 (GLIYSLGFLVGWPIILFLIAE), 148 to 168 (ILSACGSLVVVALYLIAQMVG), 183 to 203 (IAVVLVGVLMMMYVLFGGMLA), 206 to 226 (WVQIIKAVLLLFGASFMAFMV), 262 to 282 (ISALSLGLGLMFGTAGLPHIL), 303 to 323 (GFMGYFYILTFIIGFGAIMLV), 355 to 375 (LFLGFISAVAFATILAVVAGL), 404 to 424 (VSKITVLVLGVIAIILGFLFE), 428 to 448 (IAFMVGLAFAIAASCNFPIIL), 464 to 484 (GGWLGLLTAVVLMILGPTIWV), and 493 to 513 (IFPYEYPALFSISVAFLGIWF).

Belongs to the sodium:solute symporter (SSF) (TC 2.A.21) family.

Its subcellular location is the cell inner membrane. In terms of biological role, transports acetate. This chain is Cation/acetate symporter ActP, found in Salmonella paratyphi C (strain RKS4594).